A 273-amino-acid polypeptide reads, in one-letter code: Rhamnulose-1-phosphate aldolase (273 aa).

Glutamate 117 is a catalytic residue. Residues histidine 140, histidine 142, and histidine 211 each contribute to the Zn(2+) site.

Belongs to the aldolase class II family. RhaD subfamily. Zn(2+) serves as cofactor.

It is found in the cytoplasm. The catalysed reaction is L-rhamnulose 1-phosphate = (S)-lactaldehyde + dihydroxyacetone phosphate. It functions in the pathway carbohydrate degradation; L-rhamnose degradation; glycerone phosphate from L-rhamnose: step 3/3. Catalyzes the reversible cleavage of L-rhamnulose-1-phosphate to dihydroxyacetone phosphate (DHAP) and L-lactaldehyde. This chain is Rhamnulose-1-phosphate aldolase, found in Listeria monocytogenes serotype 4b (strain F2365).